Consider the following 584-residue polypeptide: Phenylalanine--tRNA ligase beta subunit (584 aa).

The B5 domain occupies 290–369; that stretch reads FSVRTKTVTH…RALGFNSLEP (80 aa). Positions 347, 353, 356, and 357 each coordinate Mg(2+).

The protein belongs to the phenylalanyl-tRNA synthetase beta subunit family. Type 2 subfamily. Tetramer of two alpha and two beta subunits. Requires Mg(2+) as cofactor.

It localises to the cytoplasm. It catalyses the reaction tRNA(Phe) + L-phenylalanine + ATP = L-phenylalanyl-tRNA(Phe) + AMP + diphosphate + H(+). This Haloarcula marismortui (strain ATCC 43049 / DSM 3752 / JCM 8966 / VKM B-1809) (Halobacterium marismortui) protein is Phenylalanine--tRNA ligase beta subunit.